Reading from the N-terminus, the 208-residue chain is Adenylyl-sulfate kinase 3 (208 aa).

37–45 lines the ATP pocket; it reads GLSGSGKST. Substrate contacts are provided by residues Asp67, Arg70, Arg84, Asn87, 110 to 111, and Gly160; that span reads IS. Ser111 functions as the Phosphoserine intermediate in the catalytic mechanism.

It belongs to the APS kinase family. Expressed in root vasculature, root tips, leaf epidermal and guard cells, pollen grains and radicle of immature seeds.

Its subcellular location is the cytoplasm. The protein resides in the cytosol. The catalysed reaction is adenosine 5'-phosphosulfate + ATP = 3'-phosphoadenylyl sulfate + ADP + H(+). It functions in the pathway sulfur metabolism; hydrogen sulfide biosynthesis; sulfite from sulfate: step 2/3. Catalyzes the synthesis of activated sulfate for the sulfation of secondary metabolites, including the glucosinolates. Essential for plant reproduction and viability. This is Adenylyl-sulfate kinase 3 from Arabidopsis thaliana (Mouse-ear cress).